The sequence spans 349 residues: uncharacterized protein (349 aa).

The N-terminal stretch at 1 to 26 (MQSHAGGSRAPLGLLLICLCLPGLFA) is a signal peptide. Disordered stretches follow at residues 30 to 113 (GAPE…QGMA) and 322 to 349 (YPAG…GITP). Residues 39–52 (HSGQPSFTSLLNPG) show a composition bias toward polar residues. Positions 90–101 (NGPPFWGPPPME) are enriched in pro residues.

In terms of assembly, binds to numerous extracellular matrix proteins.

Its subcellular location is the secreted. The protein resides in the extracellular space. It is found in the extracellular matrix. This is an uncharacterized protein from Mus musculus (Mouse).